The sequence spans 2142 residues: U5 small nuclear ribonucleoprotein 200 kDa helicase (2142 aa).

Disordered stretches follow at residues 52 to 74 (MGDR…RQKR), 211 to 234 (EESE…QDEG), and 366 to 396 (RQLD…DGGA). Residues 369–391 (DTGKSEDQEEGEARGSKRGKGDA) are compositionally biased toward basic and acidic residues. In terms of domain architecture, Helicase ATP-binding 1 spans 490–673 (KAALDSDENM…FLRVKPDKGL (184 aa)). 503–510 (APTGAGKT) contributes to the ATP binding site. The DEIH box motif lies at 615–618 (DEIH). The region spanning 684 to 917 (SLEQQYIGVT…GTVQHLQDAV (234 aa)) is the Helicase C-terminal 1 domain. In terms of domain architecture, SEC63 1 spans 981–1286 (VTDLGRIASH…GAETQLPVSF (306 aa)). The 175-residue stretch at 1337-1511 (NAVYNSDENV…WLGCNPNATF (175 aa)) folds into the Helicase ATP-binding 2 domain. 1350 to 1357 (APTGSGKM) is a binding site for ATP. The DELQ box motif lies at 1453–1456 (DELQ). The Helicase C-terminal 2 domain occupies 1544–1752 (PVYNAILKYS…TIENKQDAVD (209 aa)). An SEC63 2 domain is found at 1811–2128 (PLNLGMIAAY…GCDQEYKFSI (318 aa)).

The protein belongs to the helicase family. SKI2 subfamily.

It is found in the nucleus. The enzyme catalyses ATP + H2O = ADP + phosphate + H(+). Its function is as follows. Catalyzes the ATP-dependent unwinding of U4/U6 RNA duplices, an essential step in the assembly of a catalytically active spliceosome. Plays a role in pre-mRNA splicing. This Drosophila melanogaster (Fruit fly) protein is U5 small nuclear ribonucleoprotein 200 kDa helicase.